Consider the following 188-residue polypeptide: Elongation factor P-like protein (188 aa).

It belongs to the elongation factor P family.

The chain is Elongation factor P-like protein from Aliivibrio fischeri (strain ATCC 700601 / ES114) (Vibrio fischeri).